Consider the following 196-residue polypeptide: Probable nicotinate-nucleotide adenylyltransferase (196 aa).

Belongs to the NadD family.

The enzyme catalyses nicotinate beta-D-ribonucleotide + ATP + H(+) = deamido-NAD(+) + diphosphate. Its pathway is cofactor biosynthesis; NAD(+) biosynthesis; deamido-NAD(+) from nicotinate D-ribonucleotide: step 1/1. In terms of biological role, catalyzes the reversible adenylation of nicotinate mononucleotide (NaMN) to nicotinic acid adenine dinucleotide (NaAD). The chain is Probable nicotinate-nucleotide adenylyltransferase from Thermotoga petrophila (strain ATCC BAA-488 / DSM 13995 / JCM 10881 / RKU-1).